An 83-amino-acid chain; its full sequence is Small ribosomal subunit protein bS20 (83 aa).

Positions 1-25 (MPNIKSAIKRVNTTHTAEERNISQK) are disordered. The span at 16-25 (TAEERNISQK) shows a compositional bias: basic and acidic residues.

The protein belongs to the bacterial ribosomal protein bS20 family.

Binds directly to 16S ribosomal RNA. In Staphylococcus saprophyticus subsp. saprophyticus (strain ATCC 15305 / DSM 20229 / NCIMB 8711 / NCTC 7292 / S-41), this protein is Small ribosomal subunit protein bS20.